A 210-amino-acid polypeptide reads, in one-letter code: Large ribosomal subunit protein uL4 (210 aa).

The segment at 46–96 is disordered; it reads QGNASTKTRAEVRGGGRKPWRQKGTGRARAGSNRSPLWRGGGVIFGPKPRD. Positions 60 to 71 are enriched in basic residues; sequence GGRKPWRQKGTG.

This sequence belongs to the universal ribosomal protein uL4 family. In terms of assembly, part of the 50S ribosomal subunit.

One of the primary rRNA binding proteins, this protein initially binds near the 5'-end of the 23S rRNA. It is important during the early stages of 50S assembly. It makes multiple contacts with different domains of the 23S rRNA in the assembled 50S subunit and ribosome. Functionally, forms part of the polypeptide exit tunnel. This Gloeothece citriformis (strain PCC 7424) (Cyanothece sp. (strain PCC 7424)) protein is Large ribosomal subunit protein uL4.